Reading from the N-terminus, the 187-residue chain is ECF RNA polymerase sigma factor SigK (187 aa).

The interval 30–96 (YDHTKSRVYG…RAVDRVRCEQ (67 aa)) is sigma-70 factor domain-2. The Interaction with polymerase core subunit RpoC motif lies at 53 to 56 (ETTQ). The interval 133–182 (CLKALTDTQRQCIELAYYGGLTYVEVSRRLAANLSTIKSRMRDALRSLRN) is sigma-70 factor domain-4. Positions 155–174 (YVEVSRRLAANLSTIKSRMR) form a DNA-binding region, H-T-H motif.

The protein belongs to the sigma-70 factor family. ECF subfamily. Interacts transiently with the RNA polymerase catalytic core formed by RpoA, RpoB, RpoC and RpoZ (2 alpha, 1 beta, 1 beta' and 1 omega subunit) to form the RNA polymerase holoenzyme that can initiate transcription. Interacts (via sigma-70 factor domain 4) with anti-sigma-K factor RskA.

Its function is as follows. Sigma factors are initiation factors that promote the attachment of RNA polymerase to specific initiation sites and are then released. Extracytoplasmic function (ECF) sigma factors are held in an inactive form by an anti-sigma factor until released by regulated intramembrane proteolysis. The protein is ECF RNA polymerase sigma factor SigK (sigK) of Mycobacterium tuberculosis (strain ATCC 25177 / H37Ra).